The following is a 304-amino-acid chain: Calcium release-activated calcium channel protein 1 (304 aa).

Positions Met-1–His-11 are enriched in pro residues. Positions Met-1 to Pro-50 are disordered. Topologically, residues Met-1–Lys-89 are cytoplasmic. Residues Pro-3 to Pro-49 are required for generation of inwardly rectifying CRAC currents. The segment covering Ser-12–Ser-27 has biased composition (low complexity). The AKAP5 association region stretch occupies residues Pro-39–Ser-61. A compositionally biased stretch (pro residues) spans Gly-41–Pro-50. The tract at residues Ser-72–Ser-92 is interaction with STIM1. A helical membrane pass occupies residues Ala-90–Val-107. The Extracellular portion of the chain corresponds to Glu-108–Leu-121. Residues Leu-122 to Ile-142 form a helical membrane-spanning segment. Residues Ser-143–Glu-175 are Cytoplasmic-facing. Residues Leu-176–Leu-196 traverse the membrane as a helical segment. Residues Cys-197–Ala-237 are Extracellular-facing. Asn-225 carries an N-linked (GlcNAc...) asparagine glycan. Residues Ala-238–Val-258 form a helical membrane-spanning segment. At His-259–Ala-304 the chain is on the cytoplasmic side. The interval Glu-275 to His-295 is interaction with STIM1. Thr-298 carries the post-translational modification Phosphothreonine.

This sequence belongs to the Orai family. Oligomerizes in homomeric and heteromeric ORAI complexes. Native CRAC channels most likely consist of hexameric ORAI heteromers, implying that diverse ORAI1, ORAI2 and ORAI3 subunit combinations with distinct biophysical properties can operate in a cell-type specific way. ARC channels are heteropentamers consisting of three ORAI1 and two ORAI3 subunits. Interacts with STIM1 and STIM2; this regulates channel activity. Interacts with CALM; this may displace STIM1 and STIM2 and might thereby modulate channel activity. Interacts (via N-terminus) with AKAP5 upon store depletion. Interacts with CRACR2A/EFCAB4B; the interaction is direct and takes place in absence of Ca(2+). Forms a complex with CRACR2A/EFCAB4B and STIM1 at low concentration of Ca(2+), the complex dissociates at elevated Ca(2+) concentrations. Interacts with ASPH (isoform 8). Interacts with SLC35G1. Interacts with UBQLN1. Interacts with ADCY8; interaction is calcium store depletion independent; interaction occurs in membrane raft; interaction increases markedly after store depletion; positively regulates SOCE-induced adenylate cyclase activity; contributes to the targeting of ADCY8 to discrete regions of the plasma membrane that are shielded from other calcium events. Interacts with EFHB; the interaction takes place upon Ca(2+)-store depletion. Interacts (via N- and C-termini) with ATP2C2 (via N-terminus); this interaction regulates Ca(2+) influx at the plasma membrane. Interacts with TSPAN18; this interaction regulates ORAI1 exit from the endoplasmic (ER), and/or Golgi, and trafficking to the cell surface. Post-translationally, N-glycosylated. N-glycosylation inhibits channel activity in T cells. Ubiquitinated. In terms of processing, cys-195 is oxidated, leading to inactivation of channel activity. As to expression, expressed in lactating mammary epithelium (at protein level).

It is found in the cell membrane. The protein resides in the basolateral cell membrane. The enzyme catalyses Ca(2+)(in) = Ca(2+)(out). Oxidation at Cys-197 leads to inactivation of channel activity. In terms of biological role, pore-forming subunit of two major inward rectifying Ca(2+) channels at the plasma membrane: Ca(2+) release-activated Ca(2+) (CRAC) channels and arachidonate-regulated Ca(2+)-selective (ARC) channels. Assembles with ORAI2 and ORAI3 to form hexameric CRAC channels that mediate Ca(2+) influx upon depletion of endoplasmic reticulum Ca(2+) store and channel activation by Ca(2+) sensor STIM1, a process known as store-operated Ca(2+) entry (SOCE). Various pore subunit combinations may account for distinct CRAC channel spatiotemporal and cell-type specific dynamics. ORAI1 mainly contributes to the generation of Ca(2+) plateaus involved in sustained Ca(2+) entry and is dispensable for cytosolic Ca(2+) oscillations, whereas ORAI2 and ORAI3 generate oscillatory patterns. CRAC channels assemble in Ca(2+) signaling microdomains where Ca(2+) influx is coupled to calmodulin and calcineurin signaling and activation of NFAT transcription factors recruited to ORAI1 via AKAP5. Activates NFATC2/NFAT1 and NFATC3/NFAT4-mediated transcriptional responses. CRAC channels are the main pathway for Ca(2+) influx in T cells and promote the immune response to pathogens by activating NFAT-dependent cytokine and chemokine transcription. Assembles with ORAI3 to form channels that mediate store-independent Ca(2+) influx in response to inflammatory metabolites arachidonate or its derivative leukotriene C4, termed ARC and LRC channels respectively. Plays a prominent role in Ca(2+) influx at the basolateral membrane of mammary epithelial cells independently of the Ca(2+) content of endoplasmic reticulum or Golgi stores. May mediate transepithelial transport of large quantities of Ca(2+) for milk secretion. The sequence is that of Calcium release-activated calcium channel protein 1 (Orai1) from Mus musculus (Mouse).